We begin with the raw amino-acid sequence, 309 residues long: uncharacterized protein (309 aa).

An HTH lysR-type domain is found at 1-60; that stretch reads MKPLLDVLMILDALEKEGSFAAASAKLYKTPSALSYTVHKLESDLNIQLLDRSGHRAKFT. A DNA-binding region (H-T-H motif) is located at residues 20–39; it reads FAAASAKLYKTPSALSYTVH.

It belongs to the LysR transcriptional regulatory family.

This is an uncharacterized protein from Escherichia coli (strain K12).